Consider the following 215-residue polypeptide: 2-phospho-L-lactate guanylyltransferase (215 aa).

It belongs to the CofC family. As to quaternary structure, homodimer.

The enzyme catalyses (2S)-2-phospholactate + GTP + H(+) = (2S)-lactyl-2-diphospho-5'-guanosine + diphosphate. Its pathway is cofactor biosynthesis; coenzyme F420 biosynthesis. Its function is as follows. Guanylyltransferase that catalyzes the activation of (2S)-2-phospholactate (2-PL) as (2S)-lactyl-2-diphospho-5'-guanosine, via the condensation of 2-PL with GTP. It is involved in the biosynthesis of coenzyme F420, a hydride carrier cofactor. The polypeptide is 2-phospho-L-lactate guanylyltransferase (Methanoculleus marisnigri (strain ATCC 35101 / DSM 1498 / JR1)).